A 1110-amino-acid chain; its full sequence is RNA2 polyprotein (1110 aa).

This sequence belongs to the nepoviruses RNA2 polyprotein family. Post-translationally, specific enzymatic cleavages in vivo by the P1 encoded 3C-like protease yield mature proteins.

The protein localises to the host cell junction. Its subcellular location is the host plasmodesma. It localises to the host cytoplasm. The protein resides in the host nucleus. It is found in the virion. Its function is as follows. Implicated in RNA2 replication. Could also be required for nematode transmission of the virus. In terms of biological role, transports viral genome to neighboring plant cells directly through plasmosdesmata, without any budding. The movement protein allows efficient cell to cell propagation, by bypassing the host cell wall barrier. Acts by forming a tubular structure at the host plasmodesmata, enlarging it enough to allow free passage of virion capsids. This chain is RNA2 polyprotein, found in Vitis vinifera (Grape).